Here is a 697-residue protein sequence, read N- to C-terminus: DNA ligase (697 aa).

NAD(+)-binding positions include 34-38 (DKTYD), 83-84 (SL), and glutamate 114. Lysine 116 acts as the N6-AMP-lysine intermediate in catalysis. Residues arginine 137, glutamate 171, lysine 315, and lysine 339 each contribute to the NAD(+) site. Zn(2+) is bound by residues cysteine 430, cysteine 433, cysteine 448, and cysteine 453. One can recognise a BRCT domain in the interval 616–697 (KKSSKLNNLN…FHNLLKEENA (82 aa)).

This sequence belongs to the NAD-dependent DNA ligase family. LigA subfamily. The cofactor is Mg(2+). Requires Mn(2+) as cofactor.

The catalysed reaction is NAD(+) + (deoxyribonucleotide)n-3'-hydroxyl + 5'-phospho-(deoxyribonucleotide)m = (deoxyribonucleotide)n+m + AMP + beta-nicotinamide D-nucleotide.. DNA ligase that catalyzes the formation of phosphodiester linkages between 5'-phosphoryl and 3'-hydroxyl groups in double-stranded DNA using NAD as a coenzyme and as the energy source for the reaction. It is essential for DNA replication and repair of damaged DNA. The polypeptide is DNA ligase (Mycoplasmopsis synoviae (strain 53) (Mycoplasma synoviae)).